The following is a 116-amino-acid chain: Large ribosomal subunit protein bL19 (116 aa).

Belongs to the bacterial ribosomal protein bL19 family.

In terms of biological role, this protein is located at the 30S-50S ribosomal subunit interface and may play a role in the structure and function of the aminoacyl-tRNA binding site. This Lactobacillus gasseri (strain ATCC 33323 / DSM 20243 / BCRC 14619 / CIP 102991 / JCM 1131 / KCTC 3163 / NCIMB 11718 / NCTC 13722 / AM63) protein is Large ribosomal subunit protein bL19.